The sequence spans 283 residues: Pantothenate synthetase (283 aa).

Met-30–His-37 serves as a coordination point for ATP. The Proton donor role is filled by His-37. (R)-pantoate is bound at residue Gln-61. Gln-61 provides a ligand contact to beta-alanine. Position 147–150 (Gly-147–Asp-150) interacts with ATP. (R)-pantoate is bound at residue Gln-153. ATP is bound by residues Val-176 and Met-184–Arg-187.

The protein belongs to the pantothenate synthetase family. Homodimer.

It localises to the cytoplasm. It catalyses the reaction (R)-pantoate + beta-alanine + ATP = (R)-pantothenate + AMP + diphosphate + H(+). It functions in the pathway cofactor biosynthesis; (R)-pantothenate biosynthesis; (R)-pantothenate from (R)-pantoate and beta-alanine: step 1/1. Catalyzes the condensation of pantoate with beta-alanine in an ATP-dependent reaction via a pantoyl-adenylate intermediate. The sequence is that of Pantothenate synthetase from Nitratidesulfovibrio vulgaris (strain ATCC 29579 / DSM 644 / CCUG 34227 / NCIMB 8303 / VKM B-1760 / Hildenborough) (Desulfovibrio vulgaris).